The following is a 652-amino-acid chain: MNKRMNELVALLNRYATEYYTSDNPSVSDSEYDRLYRELVELETAYPEQVLADSPTHRVGGKVLDGFEKYSHQYPLYSLQDAFSREELDAFDARVRKEVAHPTYICELKIDGLSISLTYEKGILVAGVTRGDGSIGENITENLKRVKDIPLTLPEELDITVRGECYMPRASFDQVNQVRQENGEPEFANPRNAAAGTLRQLDTAVVAKRNLATFLYQEASPSTRDSQEKGLKYLEQLGFVVNPKRILAENIDEIWNFIQEVGQERENLPYDIDGVVIKVNDLASQEELGFTVKAPKWAVAYKFPAEEKEAQLLSVDWTVGRTGVVTPTANLTPVQLAGTTVSRATLHNVDYIAEKDIRKDDTVIVYKAGDIIPAVLRVVESKRVSEEKLDIPTNCPSCNSDLLHFEDEVALRCINPRCPAQIMEGLIHFASRDAMNITGLGPSIVEKLFAANLVKDVADIYRLQEEDFLLLEGVKEKSAAKLYQAIQASKENSAEKLLFGLGIRHVGSKASQLLLQYFHSIENLYQADSEEVASIESLGGVIAKSLQTYFATEGSEILLRELKETGVNLDYKGQTVVADAALSGLTVVLTGKLERLKRSEAKSKLESLGAKVTGSVSKKTDLVVVGADAGSKLQKAQELGIQVRDEAWLESL.

NAD(+)-binding positions include 29–33 (DSEYD), 78–79 (SL), and glutamate 107. The active-site N6-AMP-lysine intermediate is lysine 109. NAD(+) is bound by residues arginine 130, glutamate 164, lysine 278, and lysine 302. The Zn(2+) site is built by cysteine 395, cysteine 398, cysteine 413, and cysteine 418. The BRCT domain occupies 577 to 652 (VADAALSGLT…VRDEAWLESL (76 aa)).

Belongs to the NAD-dependent DNA ligase family. LigA subfamily. Mg(2+) is required as a cofactor. The cofactor is Mn(2+).

It carries out the reaction NAD(+) + (deoxyribonucleotide)n-3'-hydroxyl + 5'-phospho-(deoxyribonucleotide)m = (deoxyribonucleotide)n+m + AMP + beta-nicotinamide D-nucleotide.. DNA ligase that catalyzes the formation of phosphodiester linkages between 5'-phosphoryl and 3'-hydroxyl groups in double-stranded DNA using NAD as a coenzyme and as the energy source for the reaction. It is essential for DNA replication and repair of damaged DNA. This is DNA ligase from Streptococcus pneumoniae (strain Taiwan19F-14).